Consider the following 637-residue polypeptide: Nuclear receptor subfamily 2 group C member 1-B (637 aa).

Positions 149–224 (VELCVVCGDK…LGMKQDSVQC (76 aa)) form a DNA-binding region, nuclear receptor. 2 consecutive NR C4-type zinc fingers follow at residues 152–172 (CVVC…CEGC) and 188–207 (CRGS…CQYC). The NR LBD domain maps to 383–624 (CVGSGSNLLP…SIIPYILRME (242 aa)).

It belongs to the nuclear hormone receptor family. NR2 subfamily.

Its subcellular location is the nucleus. Functionally, orphan nuclear receptor. Binds the IR7 element in the promoter of its own gene in an autoregulatory negative feedback mechanism. Primarily repressor of a broad range of genes. Binds to hormone response elements (HREs) consisting of two 5'-AGGTCA-3' half site direct repeat consensus sequences. In Xenopus laevis (African clawed frog), this protein is Nuclear receptor subfamily 2 group C member 1-B (nr2c1-b).